The chain runs to 340 residues: tRNA-dihydrouridine(20/20a) synthase (340 aa).

FMN contacts are provided by residues 22–24 (PMM) and Gln75. Residue Cys105 is the Proton donor of the active site. FMN contacts are provided by residues Lys144, His177, 217-219 (NGG), and 239-240 (GR).

This sequence belongs to the Dus family. DusA subfamily. The cofactor is FMN.

It catalyses the reaction 5,6-dihydrouridine(20) in tRNA + NADP(+) = uridine(20) in tRNA + NADPH + H(+). It carries out the reaction 5,6-dihydrouridine(20) in tRNA + NAD(+) = uridine(20) in tRNA + NADH + H(+). The enzyme catalyses 5,6-dihydrouridine(20a) in tRNA + NADP(+) = uridine(20a) in tRNA + NADPH + H(+). The catalysed reaction is 5,6-dihydrouridine(20a) in tRNA + NAD(+) = uridine(20a) in tRNA + NADH + H(+). Functionally, catalyzes the synthesis of 5,6-dihydrouridine (D), a modified base found in the D-loop of most tRNAs, via the reduction of the C5-C6 double bond in target uridines. Specifically modifies U20 and U20a in tRNAs. This chain is tRNA-dihydrouridine(20/20a) synthase, found in Xylella fastidiosa (strain 9a5c).